The chain runs to 297 residues: Averufin oxidase stcO (297 aa).

Residues 277–297 (VVVLGVCILLLLGGLLYSIKA) form a helical membrane-spanning segment.

The protein belongs to the avfA family.

It is found in the membrane. It functions in the pathway mycotoxin biosynthesis; sterigmatocystin biosynthesis. Averufin oxidase; part of the gene cluster that mediates the biosynthesis of sterigmatocystin (ST), a polyketide-derived furanocoumarin which is part of the most toxic and carcinogenic compounds among the known mycotoxins. The first step in the biosynthesis of sterigmatocystin is the production of hexanoate by the fatty acid synthase (FAS) units stcJ and stcK. The polyketide backbone is assembled by the non-reducing polyketide synthase stcA by condensation of the starter hexanoyl-CoA and 7 malonyl-CoA extender units followed by cyclization and release of norsolorinic acid. Norsolorinic acid is the first stable intermediate in the biosynthesis of sterigmatocystin and is converted into averantin (AVN) by the ketoreductase stcE which reduces the hexanoate ketone to an alcohol. Averantin is then oxidized into 5'-hydroxyaverantin (HAVN) by the cytochrome P450 monooxygenase stcF. 5'-hydroxyaverantin is further converted to 5'-oxyaverantin (OAVN) by the 5'-hydroxyaverantin dehydrogenase stcG. The next step is the conversion of OAVN into averufin (AVF) which is catalyzed by a yet to be identified enzyme. The cytochrome P450 monooxygenase stcB and the flavin-binding monooxygenase stcW are both required for the conversion of averufin to 1-hydroxyversicolorone. The esterase stcI probably catalyzes the formation of versiconal hemiacetal acetate from 1-hydroxyversicolorone. The oxydoreductase stcN then probably catalyzes the biosynthetic step from versiconal to versicolorin B (VERB). The next step is performed by the versicolorin B desaturase stcL to produce versicolorin A (VERA). The ketoreductase stcU and the cytochrome P450 monooxygenase stcS are involved in the conversion of versicolorin A to demethylsterigmatocystin. The Baeyer-Villiger oxidas stcQ and the reductase stcR might be involved in the biosynthetic step from versicolorin A to demethylsterigmatocystin. The final step in the biosynthesis of sterigmatocystin is the methylation of demethylsterigmatocystin catalyzed by the methyltransferase stcP. This chain is Averufin oxidase stcO, found in Emericella nidulans (strain FGSC A4 / ATCC 38163 / CBS 112.46 / NRRL 194 / M139) (Aspergillus nidulans).